A 66-amino-acid chain; its full sequence is Large ribosomal subunit protein bL33c (66 aa).

The protein belongs to the bacterial ribosomal protein bL33 family.

It is found in the plastid. The protein resides in the chloroplast. This Jasminum nudiflorum (Winter jasmine) protein is Large ribosomal subunit protein bL33c.